The following is a 429-amino-acid chain: Probable proton-coupled zinc antiporter SLC30A4 (429 aa).

Topologically, residues 1–113 (MAGSGAWKRL…LLKQRKVKTR (113 aa)) are cytoplasmic. Residues 114 to 134 (LTIAAVLYLLFMIGELVGGYI) form a helical membrane-spanning segment. Residues 135–143 (ANSLAIMTD) are Lumenal-facing. Residues 144-164 (ALHMLTDLSAIILTLLALWLS) form a helical membrane-spanning segment. The Zn(2+) site is built by His-146 and Asp-150. Residues 165–178 (SKSPTKRFTFGFHR) are Cytoplasmic-facing. Residues 179–199 (LEVLSAMISVLLVYILMGFLL) traverse the membrane as a helical segment. The Lumenal segment spans residues 200–216 (YEAVQRTIHMKYEINGD). A helical membrane pass occupies residues 217-237 (IMLITAAIGVAVNVIMGFLLN). Residues 238–274 (QSGHHHAHSHSLPSNSPTTGPRCGHNQGQDSLAVRAA) lie on the Cytoplasmic side of the membrane. The segment at 240-264 (GHHHAHSHSLPSNSPTTGPRCGHNQ) is zinc binding. The helical transmembrane segment at 275 to 295 (FVHALGDLVQSVGVLIAAYII) threads the bilayer. Positions 277 and 281 each coordinate Zn(2+). At 296 to 310 (RFKPEYRIADPICTY) the chain is on the lumenal side. Residues 311–331 (VFSLLVAFTTFRIIWDTVVII) form a helical membrane-spanning segment. The Cytoplasmic portion of the chain corresponds to 332 to 429 (LEGVPSHLNV…TCANCQSSSS (98 aa)).

Belongs to the cation diffusion facilitator (CDF) transporter (TC 2.A.4) family. SLC30A subfamily. Homodimerization could regulate efficiency for zinc transport. Interacts with TMEM163.

The protein localises to the endosome membrane. Its subcellular location is the late endosome membrane. The protein resides in the lysosome membrane. It carries out the reaction Zn(2+)(in) + 2 H(+)(out) = Zn(2+)(out) + 2 H(+)(in). Functionally, probable proton-coupled zinc ion antiporter mediating zinc import from cytoplasm potentially into the endocytic compartment. Controls zinc deposition in milk. This chain is Probable proton-coupled zinc antiporter SLC30A4, found in Bos taurus (Bovine).